Reading from the N-terminus, the 288-residue chain is Protoheme IX farnesyltransferase (288 aa).

The next 9 helical transmembrane spans lie at 16–36 (VWSL…NRFT), 37–57 (LTNI…SMGA), 88–108 (VKGL…LLFF), 111–131 (YLAA…YSYL), 138–158 (WNII…WYTV), 162–182 (FSVL…IHVW), 210–230 (AICI…PVFF), 236–256 (TYMI…VLFV), and 265–285 (LKLF…VLIF).

This sequence belongs to the UbiA prenyltransferase family. Protoheme IX farnesyltransferase subfamily.

The protein localises to the cell membrane. It carries out the reaction heme b + (2E,6E)-farnesyl diphosphate + H2O = Fe(II)-heme o + diphosphate. Its pathway is porphyrin-containing compound metabolism; heme O biosynthesis; heme O from protoheme: step 1/1. Converts heme B (protoheme IX) to heme O by substitution of the vinyl group on carbon 2 of heme B porphyrin ring with a hydroxyethyl farnesyl side group. The sequence is that of Protoheme IX farnesyltransferase from Thermoplasma volcanium (strain ATCC 51530 / DSM 4299 / JCM 9571 / NBRC 15438 / GSS1).